Reading from the N-terminus, the 199-residue chain is Pyridoxal 5'-phosphate synthase subunit PdxT (199 aa).

L-glutamine is bound at residue 49–51 (GES). Cys81 acts as the Nucleophile in catalysis. L-glutamine is bound by residues Arg110 and 139-140 (IR). Catalysis depends on charge relay system residues His175 and Glu177.

Belongs to the glutaminase PdxT/SNO family. In terms of assembly, in the presence of PdxS, forms a dodecamer of heterodimers. Only shows activity in the heterodimer.

It catalyses the reaction aldehydo-D-ribose 5-phosphate + D-glyceraldehyde 3-phosphate + L-glutamine = pyridoxal 5'-phosphate + L-glutamate + phosphate + 3 H2O + H(+). It carries out the reaction L-glutamine + H2O = L-glutamate + NH4(+). The protein operates within cofactor biosynthesis; pyridoxal 5'-phosphate biosynthesis. Its function is as follows. Catalyzes the hydrolysis of glutamine to glutamate and ammonia as part of the biosynthesis of pyridoxal 5'-phosphate. The resulting ammonia molecule is channeled to the active site of PdxS. This chain is Pyridoxal 5'-phosphate synthase subunit PdxT, found in Frankia casuarinae (strain DSM 45818 / CECT 9043 / HFP020203 / CcI3).